A 59-amino-acid polypeptide reads, in one-letter code: Putative potassium channel toxin Ts22 (59 aa).

Residues Met-1–Gln-22 form the signal peptide. Cystine bridges form between Cys-29–Cys-50, Cys-35–Cys-55, and Cys-39–Cys-57.

Belongs to the short scorpion toxin superfamily. Potassium channel inhibitor family. Alpha-KTx 04 subfamily. Expressed by the venom gland.

It localises to the secreted. In terms of biological role, potently blocks voltage-gated potassium channels (Kv). This Tityus serrulatus (Brazilian scorpion) protein is Putative potassium channel toxin Ts22.